Consider the following 35-residue polypeptide: MEVNDLGFIATILFVLVPTVFLLILYIQTREETES.

Residues 7–27 (GFIATILFVLVPTVFLLILYI) form a helical membrane-spanning segment.

Belongs to the PsbM family. As to quaternary structure, PSII is composed of 1 copy each of membrane proteins PsbA, PsbB, PsbC, PsbD, PsbE, PsbF, PsbH, PsbI, PsbJ, PsbK, PsbL, PsbM, PsbT, PsbX, PsbY, PsbZ, Psb30/Ycf12, peripheral proteins PsbO, CyanoQ (PsbQ), PsbU, PsbV and a large number of cofactors. It forms dimeric complexes.

The protein localises to the cellular thylakoid membrane. Functionally, one of the components of the core complex of photosystem II (PSII). PSII is a light-driven water:plastoquinone oxidoreductase that uses light energy to abstract electrons from H(2)O, generating O(2) and a proton gradient subsequently used for ATP formation. It consists of a core antenna complex that captures photons, and an electron transfer chain that converts photonic excitation into a charge separation. This subunit is found at the monomer-monomer interface. The sequence is that of Photosystem II reaction center protein M from Crocosphaera subtropica (strain ATCC 51142 / BH68) (Cyanothece sp. (strain ATCC 51142)).